The primary structure comprises 318 residues: Transaldolase (318 aa).

Lys126 (schiff-base intermediate with substrate) is an active-site residue.

Belongs to the transaldolase family. Type 1 subfamily. As to quaternary structure, homodimer.

The protein localises to the cytoplasm. It catalyses the reaction D-sedoheptulose 7-phosphate + D-glyceraldehyde 3-phosphate = D-erythrose 4-phosphate + beta-D-fructose 6-phosphate. The protein operates within carbohydrate degradation; pentose phosphate pathway; D-glyceraldehyde 3-phosphate and beta-D-fructose 6-phosphate from D-ribose 5-phosphate and D-xylulose 5-phosphate (non-oxidative stage): step 2/3. Transaldolase is important for the balance of metabolites in the pentose-phosphate pathway. The protein is Transaldolase of Cupriavidus necator (strain ATCC 17699 / DSM 428 / KCTC 22496 / NCIMB 10442 / H16 / Stanier 337) (Ralstonia eutropha).